A 3034-amino-acid chain; its full sequence is Cadherin EGF LAG seven-pass G-type receptor 1 (3034 aa).

The signal sequence occupies residues 1–29 (MAPSSPRVLPALVLLAAAALPALELGAAA). The Extracellular portion of the chain corresponds to 30–2484 (WELRVPGGAR…REHGEVLPLK (2455 aa)). Residues 222–243 (GTPSESPSVSPSLLNLSQPRAG) show a composition bias toward low complexity. A disordered region spans residues 222–267 (GTPSESPSVSPSLLNLSQPRAGVVRRSRRGTGSSTSPQFPLPSYQV). Asn-236 carries N-linked (GlcNAc...) asparagine glycosylation. Cadherin domains follow at residues 261–368 (PLPS…SPVF), 369–474 (EQSE…YPQF), 475–580 (SEKR…APIF), 581–702 (VSSP…DPMF), 703–804 (TQPV…RPVF), 805–907 (QSSH…APRF), 908–1014 (LRDF…PPVF), 1015–1116 (EKDE…PPEL), and 1121–1239 (ILFN…SPLL). N-linked (GlcNAc...) asparagine glycans are attached at residues Asn-561, Asn-649, and Asn-793. 6 N-linked (GlcNAc...) asparagine glycosylation sites follow: Asn-1129, Asn-1154, Asn-1228, Asn-1264, Asn-1274, and Asn-1302. The EGF-like 1; calcium-binding domain maps to 1318–1376 (DDNICLREPCENYMKCVSVLRFDSSAPFISSTTVLFRPIHPITGLRCRCPPGFTGDYCE). Intrachain disulfides connect Cys-1322/Cys-1333, Cys-1327/Cys-1364, Cys-1366/Cys-1375, Cys-1382/Cys-1393, Cys-1387/Cys-1402, Cys-1404/Cys-1413, Cys-1422/Cys-1433, Cys-1427/Cys-1443, and Cys-1445/Cys-1455. In terms of domain architecture, EGF-like 2; calcium-binding spans 1378–1414 (EIDLCYSNPCGANGRCRSREGGYTCECFEDFTGEHCQ). The EGF-like 3; calcium-binding domain occupies 1418–1456 (RSGRCASGVCKNGGTCVNLLIGGFHCVCPPGEYEHPYCE). One can recognise a Laminin G-like 1 domain in the interval 1457 to 1661 (VSTRSFPPQS…IANNGTRAGC (205 aa)). 3 N-linked (GlcNAc...) asparagine glycosylation sites follow: Asn-1591, Asn-1638, and Asn-1655. Cystine bridges form between Cys-1635–Cys-1661, Cys-1668–Cys-1679, Cys-1673–Cys-1688, Cys-1690–Cys-1699, Cys-1855–Cys-1885, Cys-1891–Cys-1902, Cys-1896–Cys-1911, Cys-1913–Cys-1922, Cys-1926–Cys-1937, Cys-1931–Cys-1949, Cys-1951–Cys-1960, Cys-1968–Cys-1981, and Cys-1983–Cys-1993. The region spanning 1664 to 1700 (QRNFCDGTSCQNGGTCVNRWNTYLCECPLRFGGKNCE) is the EGF-like 4; calcium-binding domain. Residue Asn-1681 is modified to (3R)-3-hydroxyasparagine. Residues 1704 to 1885 (PHPQRFTGES…ALKVRVKDGC (182 aa)) form the Laminin G-like 2 domain. The EGF-like 5; calcium-binding domain occupies 1887 to 1922 (VEDPCASSPCPPHSHCRDTWDSYSCICDRGYFGKKC). At Asp-1904 the chain carries (3R)-3-hydroxyaspartate. The EGF-like 6; calcium-binding domain maps to 1923-1961 (VDACLLNPCKHVAACVRSPNTPRGYSCECGPGHYGQYCE). Residues 1962 to 1994 (NKVDLPCPKGWWGNPVCGPCHCAVSQGFDPDCN) enclose the EGF-like 7; calcium-binding domain. Asn-1994 carries an N-linked (GlcNAc...) asparagine glycan. One can recognise an EGF-like 8; calcium-binding domain in the interval 1996–2031 (TNGQCQCKENYYKPPAQDACLPCDCFPHGSHSRACD). 5 disulfides stabilise this stretch: Cys-2000-Cys-2015, Cys-2002-Cys-2018, Cys-2020-Cys-2030, Cys-2039-Cys-2048, and Cys-2051-Cys-2063. Positions 2018 to 2065 (CDCFPHGSHSRACDMDTGQCACKPGVIGRQCNRCDNPFAEVTSLGCEV) constitute a Laminin EGF-like domain. Asn-2118, Asn-2137, Asn-2144, Asn-2155, Asn-2160, and Asn-2272 each carry an N-linked (GlcNAc...) asparagine glycan. The tract at residues 2295–2346 (SVSFPADTFKPPEKKEGPVVRLTNRRTTPLTAQPEPRAERETSSSRRRRHPD) is disordered. In terms of domain architecture, GAIN-B spans 2312-2476 (PVVRLTNRRT…AVLMDISRRE (165 aa)). 2 cysteine pairs are disulfide-bonded: Cys-2426–Cys-2458 and Cys-2446–Cys-2460. The tract at residues 2426-2476 (CVFWNHSLDTGGTGGWSAKGCELLSRNRTHVTCQCSHSASCAVLMDISRRE) is GPS. N-linked (GlcNAc...) asparagine glycosylation is found at Asn-2430 and Asn-2452. A helical membrane pass occupies residues 2485–2505 (IITYAALSLSLVALLVAFVLL). Over 2506–2516 (SLVRTLRSNLH) the chain is Cytoplasmic. Residues 2517–2537 (SIHKNLITALFFSQLIFMVGI) traverse the membrane as a helical segment. A glycan (N-linked (GlcNAc...) asparagine) is linked at Asn-2538. The Extracellular portion of the chain corresponds to 2538 to 2542 (NQTEN). Residues 2543–2563 (PFLCTVVAILLHYVSMGTFAW) traverse the membrane as a helical segment. Residues 2564–2587 (TLVENLHVYRMLTEVRNIDTGPMR) are Cytoplasmic-facing. The chain crosses the membrane as a helical span at residues 2588–2608 (FYHVVGWGIPAIVTGLAVGLD). Over 2609–2625 (PQGYGNPDFCWLSLQDT) the chain is Extracellular. The helical transmembrane segment at 2626 to 2646 (LIWSFAGPVGTVIIINTVIFV) threads the bilayer. The Cytoplasmic segment spans residues 2647-2670 (LSAKVSCQRKHHYYERKGVVSMLR). The chain crosses the membrane as a helical span at residues 2671–2691 (TAFLLLLLVTATWLLGLLAVN). Residues 2692–2694 (SDT) lie on the Extracellular side of the membrane. The chain crosses the membrane as a helical span at residues 2695 to 2715 (LSFHYLFAAFSCLQGIFVLLF). Residues 2716–3034 (HCVAHREVRK…QANGSDSEKP (319 aa)) lie on the Cytoplasmic side of the membrane. Residues 2774–3034 (TASLDSTTRD…QANGSDSEKP (261 aa)) are disordered. Residues Ser-2776, Ser-2779, Ser-2886, and Ser-2888 each carry the phosphoserine modification. A compositionally biased stretch (basic and acidic residues) spans 2893-2909 (TEPHLKVETKVSVELHR). The segment covering 2976–2986 (SPTSSRTSSLG) has biased composition (low complexity). Positions 3003-3012 (PRREPGREHL) are enriched in basic and acidic residues. Polar residues predominate over residues 3020 to 3034 (RTGSAQANGSDSEKP).

This sequence belongs to the G-protein coupled receptor 2 family. LN-TM7 subfamily. The iron and 2-oxoglutarate dependent 3-hydroxylation of aspartate and asparagine is (R) stereospecific within EGF domains. As to expression, expressed in the brain, where it is localized principally in the ependymal cell layer, choroid plexus and the area postrema. Also found in spinal cord and in the eye.

Its subcellular location is the cell membrane. Its function is as follows. Receptor that may have an important role in cell/cell signaling during nervous system formation. This is Cadherin EGF LAG seven-pass G-type receptor 1 (Celsr1) from Mus musculus (Mouse).